The primary structure comprises 453 residues: Bifunctional protein GlmU (453 aa).

The pyrophosphorylase stretch occupies residues 1-231; it reads MERTCLAIIL…EVEMTGCNNR (231 aa). UDP-N-acetyl-alpha-D-glucosamine is bound by residues 10 to 13, lysine 24, glutamine 77, 82 to 83, 105 to 107, glycine 143, glutamate 157, asparagine 172, and asparagine 229; these read LAAG, GT, and YGD. Aspartate 107 is a binding site for Mg(2+). Mg(2+) is bound at residue asparagine 229. Positions 232–252 are linker; that stretch reads AELAFIERLWQERRRHELMLS. Residues 253-453 are N-acetyltransferase; that stretch reads GVTMIAPETV…AIKAAKKGSH (201 aa). Residues arginine 318 and lysine 336 each coordinate UDP-N-acetyl-alpha-D-glucosamine. The active-site Proton acceptor is histidine 348. Residues tyrosine 351 and asparagine 362 each coordinate UDP-N-acetyl-alpha-D-glucosamine. Residues alanine 365, 371–372, serine 390, serine 408, and arginine 425 each bind acetyl-CoA; that span reads NY.

This sequence in the N-terminal section; belongs to the N-acetylglucosamine-1-phosphate uridyltransferase family. The protein in the C-terminal section; belongs to the transferase hexapeptide repeat family. In terms of assembly, homotrimer. Mg(2+) serves as cofactor.

It is found in the cytoplasm. The enzyme catalyses alpha-D-glucosamine 1-phosphate + acetyl-CoA = N-acetyl-alpha-D-glucosamine 1-phosphate + CoA + H(+). The catalysed reaction is N-acetyl-alpha-D-glucosamine 1-phosphate + UTP + H(+) = UDP-N-acetyl-alpha-D-glucosamine + diphosphate. The protein operates within nucleotide-sugar biosynthesis; UDP-N-acetyl-alpha-D-glucosamine biosynthesis; N-acetyl-alpha-D-glucosamine 1-phosphate from alpha-D-glucosamine 6-phosphate (route II): step 2/2. It functions in the pathway nucleotide-sugar biosynthesis; UDP-N-acetyl-alpha-D-glucosamine biosynthesis; UDP-N-acetyl-alpha-D-glucosamine from N-acetyl-alpha-D-glucosamine 1-phosphate: step 1/1. Its pathway is bacterial outer membrane biogenesis; LPS lipid A biosynthesis. Catalyzes the last two sequential reactions in the de novo biosynthetic pathway for UDP-N-acetylglucosamine (UDP-GlcNAc). The C-terminal domain catalyzes the transfer of acetyl group from acetyl coenzyme A to glucosamine-1-phosphate (GlcN-1-P) to produce N-acetylglucosamine-1-phosphate (GlcNAc-1-P), which is converted into UDP-GlcNAc by the transfer of uridine 5-monophosphate (from uridine 5-triphosphate), a reaction catalyzed by the N-terminal domain. This chain is Bifunctional protein GlmU, found in Rhizobium rhizogenes (strain K84 / ATCC BAA-868) (Agrobacterium radiobacter).